Reading from the N-terminus, the 282-residue chain is Bifunctional protein FolD 1 (282 aa).

Residues 167 to 169 (GRS) and serine 192 contribute to the NADP(+) site.

This sequence belongs to the tetrahydrofolate dehydrogenase/cyclohydrolase family. In terms of assembly, homodimer.

The enzyme catalyses (6R)-5,10-methylene-5,6,7,8-tetrahydrofolate + NADP(+) = (6R)-5,10-methenyltetrahydrofolate + NADPH. It carries out the reaction (6R)-5,10-methenyltetrahydrofolate + H2O = (6R)-10-formyltetrahydrofolate + H(+). Its pathway is one-carbon metabolism; tetrahydrofolate interconversion. In terms of biological role, catalyzes the oxidation of 5,10-methylenetetrahydrofolate to 5,10-methenyltetrahydrofolate and then the hydrolysis of 5,10-methenyltetrahydrofolate to 10-formyltetrahydrofolate. The sequence is that of Bifunctional protein FolD 1 from Colwellia psychrerythraea (strain 34H / ATCC BAA-681) (Vibrio psychroerythus).